A 437-amino-acid polypeptide reads, in one-letter code: 3-phosphoshikimate 1-carboxyvinyltransferase (437 aa).

3-phosphoshikimate contacts are provided by lysine 26, serine 27, and arginine 31. Lysine 26 contributes to the phosphoenolpyruvate binding site. Phosphoenolpyruvate-binding residues include glycine 99 and arginine 127. 3-phosphoshikimate contacts are provided by serine 172, glutamine 174, aspartate 320, and lysine 347. Residue glutamine 174 participates in phosphoenolpyruvate binding. Aspartate 320 acts as the Proton acceptor in catalysis. The phosphoenolpyruvate site is built by arginine 351 and arginine 392.

It belongs to the EPSP synthase family. In terms of assembly, monomer.

Its subcellular location is the cytoplasm. The catalysed reaction is 3-phosphoshikimate + phosphoenolpyruvate = 5-O-(1-carboxyvinyl)-3-phosphoshikimate + phosphate. It participates in metabolic intermediate biosynthesis; chorismate biosynthesis; chorismate from D-erythrose 4-phosphate and phosphoenolpyruvate: step 6/7. Functionally, catalyzes the transfer of the enolpyruvyl moiety of phosphoenolpyruvate (PEP) to the 5-hydroxyl of shikimate-3-phosphate (S3P) to produce enolpyruvyl shikimate-3-phosphate and inorganic phosphate. This chain is 3-phosphoshikimate 1-carboxyvinyltransferase, found in Methylococcus capsulatus (strain ATCC 33009 / NCIMB 11132 / Bath).